We begin with the raw amino-acid sequence, 717 residues long: Segment polarity protein dishevelled homolog DVL-3 (717 aa).

Residues 1-82 (MGETKVIYHL…RVVCWLVSAD (82 aa)) enclose the DIX domain. The disordered stretch occupies residues 89–235 (GSVCADIQSD…PQIERSSSFS (147 aa)). The span at 118–127 (HPNTRGSQEN) shows a compositional bias: polar residues. The span at 140–155 (ARRERPGRKETSEHAT) shows a compositional bias: basic and acidic residues. Residues 173 to 189 (ESSSTLMSSELDSTSFF) are compositionally biased toward low complexity. A compositionally biased stretch (polar residues) spans 199–210 (RFSNSTEQSSAS). Residues 212 to 224 (LMRRHKRRRRKPK) show a composition bias toward basic residues. The 86-residue stretch at 248–333 (TVTLNMEKYN…KPGPITLTVA (86 aa)) folds into the PDZ domain. The region spanning 421–495 (SESGLEVRDR…SEQCYYIFGD (75 aa)) is the DEP domain. The disordered stretch occupies residues 552 to 653 (PDPAYIYGGG…THQSFGPPGI (102 aa)). Residues 564–579 (GSQHSEGSRSSGSNRS) are compositionally biased toward low complexity. Basic and acidic residues-rich tracts occupy residues 580–593 (STEK…KGGD) and 602–618 (ESDH…RAAS). Basic residues predominate over residues 629–645 (HRSHHSIAHSIRSHHTH).

This sequence belongs to the DSH family. Expressed throughout the epidermis.

The protein resides in the cytoplasm. Involved in the signal transduction pathway mediated by multiple Wnt genes. Required during ciliogenesis for the docking of basal bodies to the apical plasma membrane. The chain is Segment polarity protein dishevelled homolog DVL-3 from Xenopus laevis (African clawed frog).